Here is a 34-residue protein sequence, read N- to C-terminus: uncharacterized protein (34 aa).

Positions 1-12 are enriched in basic and acidic residues; it reads MFSHFEVSENRP. The disordered stretch occupies residues 1-21; sequence MFSHFEVSENRPRKQPRRKRI.

This is an uncharacterized protein from Saccharomyces cerevisiae (strain ATCC 204508 / S288c) (Baker's yeast).